The primary structure comprises 206 residues: Outer-membrane lipoprotein carrier protein (206 aa).

The N-terminal stretch at 1–21 (MKKLLCAVLLSPLLYSNAVLA) is a signal peptide.

Belongs to the LolA family. As to quaternary structure, monomer.

The protein localises to the periplasm. Functionally, participates in the translocation of lipoproteins from the inner membrane to the outer membrane. Only forms a complex with a lipoprotein if the residue after the N-terminal Cys is not an aspartate (The Asp acts as a targeting signal to indicate that the lipoprotein should stay in the inner membrane). This is Outer-membrane lipoprotein carrier protein from Shewanella sp. (strain MR-7).